Here is a 571-residue protein sequence, read N- to C-terminus: Urease subunit alpha (571 aa).

The Urease domain maps to 134–571 (GAIDTHIHFI…LPMAQRYFLF (438 aa)). His-139, His-141, and Lys-222 together coordinate Ni(2+). Position 222 is an N6-carboxylysine (Lys-222). His-224 is a binding site for substrate. 2 residues coordinate Ni(2+): His-251 and His-277. Catalysis depends on His-325, which acts as the Proton donor. Position 365 (Asp-365) interacts with Ni(2+).

It belongs to the metallo-dependent hydrolases superfamily. Urease alpha subunit family. In terms of assembly, heterotrimer of UreA (gamma), UreB (beta) and UreC (alpha) subunits. Three heterotrimers associate to form the active enzyme. Requires Ni cation as cofactor. Carboxylation allows a single lysine to coordinate two nickel ions.

It is found in the cytoplasm. It carries out the reaction urea + 2 H2O + H(+) = hydrogencarbonate + 2 NH4(+). It functions in the pathway nitrogen metabolism; urea degradation; CO(2) and NH(3) from urea (urease route): step 1/1. The chain is Urease subunit alpha from Bordetella parapertussis (strain 12822 / ATCC BAA-587 / NCTC 13253).